The sequence spans 404 residues: Glucose-1-phosphate adenylyltransferase (404 aa).

Alpha-D-glucose 1-phosphate-binding positions include tyrosine 99, glycine 164, 179-180 (EK), and serine 197.

The protein belongs to the bacterial/plant glucose-1-phosphate adenylyltransferase family. In terms of assembly, homotetramer.

The enzyme catalyses alpha-D-glucose 1-phosphate + ATP + H(+) = ADP-alpha-D-glucose + diphosphate. It participates in glycan biosynthesis; glycogen biosynthesis. In terms of biological role, involved in the biosynthesis of ADP-glucose, a building block required for the elongation reactions to produce glycogen. Catalyzes the reaction between ATP and alpha-D-glucose 1-phosphate (G1P) to produce pyrophosphate and ADP-Glc. The chain is Glucose-1-phosphate adenylyltransferase from Rhodococcus erythropolis (strain PR4 / NBRC 100887).